A 258-amino-acid polypeptide reads, in one-letter code: Imidazole glycerol phosphate synthase subunit HisF (258 aa).

Catalysis depends on residues D11 and D130.

This sequence belongs to the HisA/HisF family. In terms of assembly, heterodimer of HisH and HisF.

The protein localises to the cytoplasm. The catalysed reaction is 5-[(5-phospho-1-deoxy-D-ribulos-1-ylimino)methylamino]-1-(5-phospho-beta-D-ribosyl)imidazole-4-carboxamide + L-glutamine = D-erythro-1-(imidazol-4-yl)glycerol 3-phosphate + 5-amino-1-(5-phospho-beta-D-ribosyl)imidazole-4-carboxamide + L-glutamate + H(+). It participates in amino-acid biosynthesis; L-histidine biosynthesis; L-histidine from 5-phospho-alpha-D-ribose 1-diphosphate: step 5/9. IGPS catalyzes the conversion of PRFAR and glutamine to IGP, AICAR and glutamate. The HisF subunit catalyzes the cyclization activity that produces IGP and AICAR from PRFAR using the ammonia provided by the HisH subunit. This is Imidazole glycerol phosphate synthase subunit HisF from Photorhabdus laumondii subsp. laumondii (strain DSM 15139 / CIP 105565 / TT01) (Photorhabdus luminescens subsp. laumondii).